Here is a 459-residue protein sequence, read N- to C-terminus: Exodeoxyribonuclease 7 large subunit (459 aa).

Belongs to the XseA family. As to quaternary structure, heterooligomer composed of large and small subunits.

The protein resides in the cytoplasm. It carries out the reaction Exonucleolytic cleavage in either 5'- to 3'- or 3'- to 5'-direction to yield nucleoside 5'-phosphates.. Bidirectionally degrades single-stranded DNA into large acid-insoluble oligonucleotides, which are then degraded further into small acid-soluble oligonucleotides. The sequence is that of Exodeoxyribonuclease 7 large subunit from Pseudomonas fluorescens (strain ATCC BAA-477 / NRRL B-23932 / Pf-5).